A 601-amino-acid chain; its full sequence is Elongation factor 4 (601 aa).

The tr-type G domain maps to 6-188 (QCIRNFSIIA…AVVAKVPPPQ (183 aa)). GTP contacts are provided by residues 18–23 (DHGKST) and 135–138 (NKID).

The protein belongs to the TRAFAC class translation factor GTPase superfamily. Classic translation factor GTPase family. LepA subfamily.

Its subcellular location is the cell membrane. It carries out the reaction GTP + H2O = GDP + phosphate + H(+). Required for accurate and efficient protein synthesis under certain stress conditions. May act as a fidelity factor of the translation reaction, by catalyzing a one-codon backward translocation of tRNAs on improperly translocated ribosomes. Back-translocation proceeds from a post-translocation (POST) complex to a pre-translocation (PRE) complex, thus giving elongation factor G a second chance to translocate the tRNAs correctly. Binds to ribosomes in a GTP-dependent manner. This is Elongation factor 4 from Desulfitobacterium hafniense (strain DSM 10664 / DCB-2).